Consider the following 520-residue polypeptide: Putative lipase ATG15 (520 aa).

The Cytoplasmic portion of the chain corresponds to 1-14 (MLHKSPSRKRFASP). The chain crosses the membrane as a helical; Signal-anchor for type II membrane protein span at residues 15 to 35 (LHLGCILTLTVLCLIAYYFAL). Topologically, residues 36-520 (PDYLSVGKSS…WLGFCTKYEL (485 aa)) are lumenal. Asn-173, Asn-202, and Asn-208 each carry an N-linked (GlcNAc...) asparagine glycan. Ser-332 functions as the Charge relay system in the catalytic mechanism.

Belongs to the AB hydrolase superfamily. Lipase family. Binds to both phosphatidylinositol (PI) and phosphatidylinositol 3,5-bisphosphate (PIP2).

It localises to the endosome. It is found in the multivesicular body membrane. The protein resides in the prevacuolar compartment membrane. It carries out the reaction a triacylglycerol + H2O = a diacylglycerol + a fatty acid + H(+). In terms of biological role, lipase which is essential for lysis of subvacuolar cytoplasm to vacuole targeted bodies and intravacuolar autophagic bodies. Involved in the lysis of intravacuolar multivesicular body (MVB) vesicles. The intravacuolar membrane disintegration by ATG15 is critical to life span extension. In Saccharomyces cerevisiae (strain YJM789) (Baker's yeast), this protein is Putative lipase ATG15 (ATG15).